Consider the following 380-residue polypeptide: MAPNIRKSHPLLKMINNSLIDLPAPSNISAWWNFGSLLAVCLATQIITGLLLAMHYTADTSLAFSSVAHTCRNVQYGWLIRNLHANGASFFFICIFLHIGRGLYYGSYLYKETWNTGVVLLLTLMATAFVGYVLPWGQMSFWGATVITNLFSAIPYIGQTLVEWAWGGFSVDNPTLTRFFALHFLLPFVIAGITIIHLTFLHESGSNNPLGISSNSDKIPFHPYYSLKDILGLTLMFIPFLTLALFSPNLLGDPENFTPANPLVTPPHIKPEWYFLFAYAILRSIPNKLGGVLALAASVLILLLIPFLHKSKQRTMTFRPLSQILFWLLVANLLILTWIGSQPVEHPFIIIGQMASFSYFSILLILFPAIGTLENKMLNH.

A run of 4 helical transmembrane segments spans residues 34-54 (FGSL…LLAM), 78-99 (WLIR…FLHI), 114-134 (WNTG…GYVL), and 179-199 (FFAL…IHLT). 2 residues coordinate heme b: His84 and His98. Heme b is bound by residues His183 and His197. His202 is an a ubiquinone binding site. The next 4 membrane-spanning stretches (helical) occupy residues 227–247 (LKDI…ALFS), 289–309 (LGGV…PFLH), 321–341 (LSQI…WIGS), and 348–368 (FIII…ILFP).

The protein belongs to the cytochrome b family. The cytochrome bc1 complex contains 11 subunits: 3 respiratory subunits (MT-CYB, CYC1 and UQCRFS1), 2 core proteins (UQCRC1 and UQCRC2) and 6 low-molecular weight proteins (UQCRH/QCR6, UQCRB/QCR7, UQCRQ/QCR8, UQCR10/QCR9, UQCR11/QCR10 and a cleavage product of UQCRFS1). This cytochrome bc1 complex then forms a dimer. The cofactor is heme b.

The protein localises to the mitochondrion inner membrane. Functionally, component of the ubiquinol-cytochrome c reductase complex (complex III or cytochrome b-c1 complex) that is part of the mitochondrial respiratory chain. The b-c1 complex mediates electron transfer from ubiquinol to cytochrome c. Contributes to the generation of a proton gradient across the mitochondrial membrane that is then used for ATP synthesis. This is Cytochrome b (MT-CYB) from Pavo muticus (Green peafowl).